Here is a 246-residue protein sequence, read N- to C-terminus: Probable septum site-determining protein MinC (246 aa).

Belongs to the MinC family. Interacts with MinD and FtsZ.

Its function is as follows. Cell division inhibitor that blocks the formation of polar Z ring septums. Rapidly oscillates between the poles of the cell to destabilize FtsZ filaments that have formed before they mature into polar Z rings. Prevents FtsZ polymerization. The chain is Probable septum site-determining protein MinC from Lachnospira eligens (strain ATCC 27750 / DSM 3376 / VPI C15-48 / C15-B4) (Eubacterium eligens).